We begin with the raw amino-acid sequence, 822 residues long: Protein SIEVE ELEMENT OCCLUSION A (822 aa).

Residues 25 to 62 (PRSAEQRLADNAGERRPLAPRSHEDNPFGGHTDDHHVA) are disordered. Residues 28-62 (AEQRLADNAGERRPLAPRSHEDNPFGGHTDDHHVA) are compositionally biased toward basic and acidic residues.

In terms of assembly, can form homodimer. In terms of tissue distribution, expressed in phloem sieve elements.

In terms of biological role, scaffold protein required to form the phloem filament matrix in sieve elements. The sequence is that of Protein SIEVE ELEMENT OCCLUSION A from Arabidopsis thaliana (Mouse-ear cress).